The following is a 120-amino-acid chain: MSSDKSSDSKNGLKNCDPRCEQKCETKCQPSCLNKLLQRCSEKCSLDKCPPSPNCPPCPPCPPCPLVCQSQCSTPTSPLCPPLCSPRCSGTLACCPPSCPQKGCVKPCPPKCPSPCLPRK.

The protein belongs to the cornifin (SPRR) family.

The protein is Late cornified envelope-like proline-rich protein 1 (Lelp1) of Mus musculus (Mouse).